The chain runs to 122 residues: uncharacterized protein (122 aa).

At Thr-55 the chain carries Phosphothreonine. Phosphoserine occurs at positions 72, 86, 96, 112, and 118.

Its subcellular location is the cytoplasm. This is an uncharacterized protein from Homo sapiens (Human).